Consider the following 129-residue polypeptide: Replication initiation control protein YabA (129 aa).

A disordered region spans residues 52-71 (LSLTDEATPEPKAETEAEHG). Residues 60–71 (PEPKAETEAEHG) are compositionally biased toward basic and acidic residues. Residues H103, C105, C119, and C122 each contribute to the Zn(2+) site.

The protein belongs to the YabA family. In terms of assembly, homotetramer. Interacts with both DnaA and DnaN, acting as a bridge between these two proteins. Zn(2+) is required as a cofactor.

It localises to the cytoplasm. Its subcellular location is the nucleoid. Its function is as follows. Involved in control of chromosome replication initiation. Inhibits the cooperative binding of DnaA to the oriC region, thus negatively regulating initiation of chromosome replication. Inhibits the ability of DnaA-ATP to form a helix on DNA; does not disassemble preformed DnaA-DNA helices. Decreases the residence time of DnaA on the chromosome at its binding sites (oriC, replication forks and promoter-binding sites). Tethers DnaA to the replication machinery via the DNA polymerase beta sliding clamp subunit (dnaN). Associates with oriC and other DnaA targets on the chromosome in a DnaA-dependent manner. The polypeptide is Replication initiation control protein YabA (Listeria monocytogenes serotype 4a (strain HCC23)).